The chain runs to 266 residues: Proteasome subunit beta type-7 (266 aa).

Positions 1–34 (MENLNRGGFDFDLCNRNNVLEKTGLRMKGFMKTG) are cleaved as a propeptide — removed in mature form. The active-site Nucleophile is Thr-35.

It belongs to the peptidase T1B family. In terms of assembly, the 26S proteasome consists of a 20S proteasome core and two 19S regulatory subunits. The 20S proteasome core is composed of 28 subunits that are arranged in four stacked rings, resulting in a barrel-shaped structure. The two end rings are each formed by seven alpha subunits, and the two central rings are each formed by seven beta subunits. The catalytic chamber with the active sites is on the inside of the barrel.

It localises to the cytoplasm. It is found in the nucleus. It carries out the reaction Cleavage of peptide bonds with very broad specificity.. The proteasome is a multicatalytic proteinase complex which is characterized by its ability to cleave peptides with Arg, Phe, Tyr, Leu, and Glu adjacent to the leaving group at neutral or slightly basic pH. The proteasome has an ATP-dependent proteolytic activity. The sequence is that of Proteasome subunit beta type-7 (psmB7) from Dictyostelium discoideum (Social amoeba).